The sequence spans 196 residues: Nucleoside triphosphate pyrophosphatase (196 aa).

The active-site Proton acceptor is Asp-72.

This sequence belongs to the Maf family. Requires a divalent metal cation as cofactor.

It localises to the cytoplasm. The catalysed reaction is a ribonucleoside 5'-triphosphate + H2O = a ribonucleoside 5'-phosphate + diphosphate + H(+). It catalyses the reaction a 2'-deoxyribonucleoside 5'-triphosphate + H2O = a 2'-deoxyribonucleoside 5'-phosphate + diphosphate + H(+). Functionally, nucleoside triphosphate pyrophosphatase. May have a dual role in cell division arrest and in preventing the incorporation of modified nucleotides into cellular nucleic acids. The polypeptide is Nucleoside triphosphate pyrophosphatase (Chlamydia muridarum (strain MoPn / Nigg)).